The chain runs to 62 residues: Small ribosomal subunit protein eS17 (62 aa).

Belongs to the eukaryotic ribosomal protein eS17 family.

The chain is Small ribosomal subunit protein eS17 from Methanocaldococcus jannaschii (strain ATCC 43067 / DSM 2661 / JAL-1 / JCM 10045 / NBRC 100440) (Methanococcus jannaschii).